An 842-amino-acid polypeptide reads, in one-letter code: Ionotropic receptor 21a (842 aa).

Residues 1–15 (MSYYWVALVLFTAQA) form the signal peptide. A glycan (N-linked (GlcNAc...) asparagine) is linked at N325. Helical transmembrane passes span 405–425 (WPVW…IVFT) and 437–457 (WGEV…AFSF). N-linked (GlcNAc...) asparagine glycosylation occurs at N469. The helical transmembrane segment at 479-499 (WLFTIIITSCYTGSIIAFVTL) threads the bilayer. 4 N-linked (GlcNAc...) asparagine glycosylation sites follow: N533, N558, N583, and N588. A helical membrane pass occupies residues 680–700 (MFLLMALGYFLGATALVSEIV). The tract at residues 722-745 (WSSASSGSMLRTNAEQLSHDKRKA) is disordered. N-linked (GlcNAc...) asparagine glycosylation is found at N765 and N797.

It belongs to the glutamate-gated ion channel (TC 1.A.10.1) family. Expressed in the dorsal organ cool cells. In the antenna, expressed in approximately six neurons in the arista as well as five to ten neurons near the third chamber of the sacculus.

It localises to the cell membrane. Functionally, integral part of a neural sensory system in the antenna that provides the neural basis for the response to environmental changes in temperature (thermosensation). Together with Ir25a and Ir93a, mediates the response of the dorsal organ cool cells, a trio of cool-responsive neurons, to cooling and is required for cool avoidance behavior. The protein is Ionotropic receptor 21a of Drosophila melanogaster (Fruit fly).